Here is a 176-residue protein sequence, read N- to C-terminus: NAD(P)H-quinone oxidoreductase subunit 6, chloroplastic (176 aa).

The next 5 helical transmembrane spans lie at 10–30 (FLLV…VLLA), 33–53 (IYSA…YILA), 61–81 (AQLL…VMFI), 92–112 (LWTV…VSLI), and 152–172 (FFLP…GAIA).

This sequence belongs to the complex I subunit 6 family. NDH is composed of at least 16 different subunits, 5 of which are encoded in the nucleus.

It is found in the plastid. Its subcellular location is the chloroplast thylakoid membrane. It carries out the reaction a plastoquinone + NADH + (n+1) H(+)(in) = a plastoquinol + NAD(+) + n H(+)(out). It catalyses the reaction a plastoquinone + NADPH + (n+1) H(+)(in) = a plastoquinol + NADP(+) + n H(+)(out). In terms of biological role, NDH shuttles electrons from NAD(P)H:plastoquinone, via FMN and iron-sulfur (Fe-S) centers, to quinones in the photosynthetic chain and possibly in a chloroplast respiratory chain. The immediate electron acceptor for the enzyme in this species is believed to be plastoquinone. Couples the redox reaction to proton translocation, and thus conserves the redox energy in a proton gradient. The polypeptide is NAD(P)H-quinone oxidoreductase subunit 6, chloroplastic (ndhG) (Guizotia abyssinica (Niger)).